The primary structure comprises 357 residues: Protein BIG GRAIN 1-like A (357 aa).

Disordered stretches follow at residues 1–146 and 208–233; these read MEIT…KELG and SSTC…GKSK. Residues 75–87 show a composition bias toward basic and acidic residues; it reads DFERSRRKTDFLR. Composition is skewed to low complexity over residues 88–104 and 112–127; these read HSNS…SSES and KSSA…QPKP. A compositionally biased stretch (polar residues) spans 129-139; sequence RTSSVDHSSAV. Over residues 208–223 the composition is skewed to low complexity; the sequence is SSTCSSASSFSRSCLS.

This sequence belongs to the BIG GRAIN 1 (BG1) plant protein family.

Its subcellular location is the cell membrane. Its function is as follows. Involved in auxin transport. Regulator of the auxin signaling pathway. This Arabidopsis thaliana (Mouse-ear cress) protein is Protein BIG GRAIN 1-like A.